Reading from the N-terminus, the 265-residue chain is Hydroxyethylthiazole kinase (265 aa).

Met50 is a binding site for substrate. Residues Arg125 and Thr171 each contribute to the ATP site. Gly198 contributes to the substrate binding site.

This sequence belongs to the Thz kinase family. It depends on Mg(2+) as a cofactor.

The catalysed reaction is 5-(2-hydroxyethyl)-4-methylthiazole + ATP = 4-methyl-5-(2-phosphooxyethyl)-thiazole + ADP + H(+). Its pathway is cofactor biosynthesis; thiamine diphosphate biosynthesis; 4-methyl-5-(2-phosphoethyl)-thiazole from 5-(2-hydroxyethyl)-4-methylthiazole: step 1/1. Its function is as follows. Catalyzes the phosphorylation of the hydroxyl group of 4-methyl-5-beta-hydroxyethylthiazole (THZ). In Salmonella paratyphi B (strain ATCC BAA-1250 / SPB7), this protein is Hydroxyethylthiazole kinase.